The chain runs to 155 residues: Endoribonuclease YbeY (155 aa).

Residues His-120, His-124, and His-130 each coordinate Zn(2+).

Belongs to the endoribonuclease YbeY family. Requires Zn(2+) as cofactor.

The protein localises to the cytoplasm. Its function is as follows. Single strand-specific metallo-endoribonuclease involved in late-stage 70S ribosome quality control and in maturation of the 3' terminus of the 16S rRNA. The sequence is that of Endoribonuclease YbeY from Staphylococcus epidermidis (strain ATCC 12228 / FDA PCI 1200).